A 64-amino-acid polypeptide reads, in one-letter code: PYLa/PGLa B (64 aa).

The signal sequence occupies residues 1 to 20 (MYKQIFLCLIIAALCATIMA). Positions 21–35 (EASALADADDDDDKR) are excised as a propeptide. Position 59 is a leucine amide (Leu59). Residues 60–64 (GRRDS) constitute a propeptide that is removed on maturation.

Belongs to the gastrin/cholecystokinin family. Magainin subfamily. Expressed by the skin glands. Synthesized in the stomach and stored in a novel granular multinucleated cell in the gastric mucosa. Stored as active, processed peptides in large granules within the granular gland secretions of the skin.

It is found in the secreted. In terms of biological role, PGLa and PGLa-H display a broad-spectrum of antibacterial activity against a range of Gram-positive and Gram-negative bacteria. PGLa also displays antifungal activity against C.albicans ATCC 14053. PGLa-H shows moderate antibacterial activity against the multidrug-resistant methicillin-resistant S.aureus (MRSA) but exhibits very little hemolytic activity. The polypeptide is PYLa/PGLa B (pgla-b) (Xenopus laevis (African clawed frog)).